A 323-amino-acid polypeptide reads, in one-letter code: Coiled-coil domain-containing protein 160 (323 aa).

Residues 143–290 (SKLRLNLLNE…IKNELRTEKS (148 aa)) adopt a coiled-coil conformation.

Belongs to the CCDC160 family.

This Bos taurus (Bovine) protein is Coiled-coil domain-containing protein 160 (CCDC160).